The sequence spans 371 residues: Queuine tRNA-ribosyltransferase (371 aa).

The Proton acceptor role is filled by aspartate 93. Residues 93–97, aspartate 147, glutamine 191, and glycine 218 each bind substrate; that span reads DSGGF. The RNA binding stretch occupies residues 249–255; it reads GVGTVVD. Residue aspartate 268 is the Nucleophile of the active site. Positions 273 to 277 are RNA binding; important for wobble base 34 recognition; sequence TRNAR. Zn(2+)-binding residues include cysteine 306, cysteine 308, cysteine 311, and histidine 337.

It belongs to the queuine tRNA-ribosyltransferase family. Homodimer. Within each dimer, one monomer is responsible for RNA recognition and catalysis, while the other monomer binds to the replacement base PreQ1. Zn(2+) serves as cofactor.

It catalyses the reaction 7-aminomethyl-7-carbaguanine + guanosine(34) in tRNA = 7-aminomethyl-7-carbaguanosine(34) in tRNA + guanine. Its pathway is tRNA modification; tRNA-queuosine biosynthesis. Its function is as follows. Catalyzes the base-exchange of a guanine (G) residue with the queuine precursor 7-aminomethyl-7-deazaguanine (PreQ1) at position 34 (anticodon wobble position) in tRNAs with GU(N) anticodons (tRNA-Asp, -Asn, -His and -Tyr). Catalysis occurs through a double-displacement mechanism. The nucleophile active site attacks the C1' of nucleotide 34 to detach the guanine base from the RNA, forming a covalent enzyme-RNA intermediate. The proton acceptor active site deprotonates the incoming PreQ1, allowing a nucleophilic attack on the C1' of the ribose to form the product. After dissociation, two additional enzymatic reactions on the tRNA convert PreQ1 to queuine (Q), resulting in the hypermodified nucleoside queuosine (7-(((4,5-cis-dihydroxy-2-cyclopenten-1-yl)amino)methyl)-7-deazaguanosine). The polypeptide is Queuine tRNA-ribosyltransferase (Leptospira biflexa serovar Patoc (strain Patoc 1 / Ames)).